The following is a 77-amino-acid chain: MGLCFPCPGESAPPTPDLEEKRAKLAEAAERRQKEAASRGILDVQSVQEKRKKKEKIEKQIATSGPPPEGGLRWTVS.

Disordered stretches follow at residues 1-20 and 25-77; these read MGLC…DLEE and LAEA…WTVS. Gly-2 is lipidated: N-myristoyl glycine. S-palmitoyl cysteine attachment occurs at residues Cys-4 and Cys-7. The segment at 21 to 33 is VCP/p97-interacting motif (VIM); that stretch reads KRAKLAEAAERRQ. Positions 25–37 are enriched in basic and acidic residues; it reads LAEAAERRQKEAA. Ser-46 is modified (phosphoserine).

The protein belongs to the SVIP family. In terms of assembly, interacts (via VIM motif) with VCP/p97. Forms a complex with VCP/p97 and DERL1.

It localises to the membrane. It is found in the smooth endoplasmic reticulum membrane. The protein localises to the golgi apparatus membrane. The protein resides in the cell membrane. Its subcellular location is the lysosome membrane. Its function is as follows. Negative regulator of the ER-associated degradation pathway (ERAD) of misfolded proteins. It competes with AMFR/gp78 for binding VCP/p97, and inhibits AMFR/gp78-VCP/p97 complex formation that is required for degradation of ERAD substrates. Involved in the regulation of adrenal cortisol and dehydroepiandrosterone (DHEA) biosynthesis. In Homo sapiens (Human), this protein is Small VCP/p97-interacting protein (SVIP).